The primary structure comprises 168 residues: tRNA (cytidine(56)-2'-O)-methyltransferase (168 aa).

Residues Leu79 and 104–108 (GAEKV) each bind S-adenosyl-L-methionine.

The protein belongs to the aTrm56 family. In terms of assembly, homodimer.

The protein resides in the cytoplasm. It catalyses the reaction cytidine(56) in tRNA + S-adenosyl-L-methionine = 2'-O-methylcytidine(56) in tRNA + S-adenosyl-L-homocysteine + H(+). Its function is as follows. Specifically catalyzes the AdoMet-dependent 2'-O-ribose methylation of cytidine at position 56 in tRNAs. The polypeptide is tRNA (cytidine(56)-2'-O)-methyltransferase (Archaeoglobus fulgidus (strain ATCC 49558 / DSM 4304 / JCM 9628 / NBRC 100126 / VC-16)).